The sequence spans 362 residues: Prostaglandin F2-alpha receptor (362 aa).

At 1–31 (MSTNNSVQPVSPASELLSNTTCQLEEDLSIS) the chain is on the extracellular side. Residues Asn-4 and Asn-19 are each glycosylated (N-linked (GlcNAc...) asparagine). The chain crosses the membrane as a helical span at residues 32 to 54 (FSIIFMTVGILSNSLAIAILMKA). The Cytoplasmic portion of the chain corresponds to 55–69 (YQRFRQKYKSSFLLL). A helical membrane pass occupies residues 70–90 (ASALVITDFFGHLINGTIAVF). Residues 91–109 (VYASDKDWIYFDKSNILCS) lie on the Extracellular side of the membrane. An intrachain disulfide couples Cys-108 to Cys-186. The chain crosses the membrane as a helical span at residues 110-131 (IFGICMVFSGLCPLFLGSLMAI). The Cytoplasmic segment spans residues 132-152 (ERCIGVTKPIFHSTKITTKHV). Residues 153–175 (KMMLSGVCFFAVFVALLPILGHR) form a helical membrane-spanning segment. Residues 176–198 (DYKIQASRTWCFYKTDQIKDWED) lie on the Extracellular side of the membrane. A helical transmembrane segment spans residues 199–224 (RFYLLLFAFLGLLALGISFVCNAITG). Over 225-250 (ISLLKVKFRSQQHRQGRSHHFEMVIQ) the chain is Cytoplasmic. Residues 251 to 267 (LLGIMCVSCICWSPFLV) form a helical membrane-spanning segment. The Extracellular segment spans residues 268 to 285 (TMASIGMNIQDFKDSCER). Residues 286–307 (TLFTLRMATWNQILDPWVYILL) form a helical membrane-spanning segment. Over 308–362 (RKAVLRNLYVCTRRCCGVHVISLHVWELSSIKNSLKVAAISDLPVTEKVTQQTST) the chain is Cytoplasmic.

It belongs to the G-protein coupled receptor 1 family.

Its subcellular location is the cell membrane. In terms of biological role, receptor for prostaglandin F2-alpha (PGF2-alpha). The activity of this receptor is mediated by G proteins which activate a phosphatidylinositol-calcium second messenger system. Initiates luteolysis in the corpus luteum. The protein is Prostaglandin F2-alpha receptor (PTGFR) of Ovis aries (Sheep).